The chain runs to 198 residues: uncharacterized protein (198 aa).

Its subcellular location is the plastid. The protein resides in the chloroplast. This is an uncharacterized protein from Antithamnion sp. (Red alga).